Reading from the N-terminus, the 254-residue chain is Protein GltF (254 aa).

An N-terminal signal peptide occupies residues 1–25; that stretch reads MFFKKNLTTAAICAALSVAAFSAMA. A helical transmembrane segment spans residues 213-229; the sequence is PVAITAVTFPLLIDAAV.

This sequence to E.coli YhcF.

Its subcellular location is the cell membrane. Its function is as follows. Involved in induction of the so-called NTR enzymes in response to nitrogen deprivation, as well as in glutamate biosynthesis. May mediate the glutamate-dependent repression of the GLT operon. This is Protein GltF (gltF) from Escherichia coli (strain K12).